A 477-amino-acid chain; its full sequence is Methylenetetrahydrofolate--tRNA-(uracil-5-)-methyltransferase TrmFO (477 aa).

Residue Gly14 to Gly19 participates in FAD binding.

The protein belongs to the MnmG family. TrmFO subfamily. FAD is required as a cofactor.

The protein localises to the cytoplasm. The catalysed reaction is uridine(54) in tRNA + (6R)-5,10-methylene-5,6,7,8-tetrahydrofolate + NADH + H(+) = 5-methyluridine(54) in tRNA + (6S)-5,6,7,8-tetrahydrofolate + NAD(+). It catalyses the reaction uridine(54) in tRNA + (6R)-5,10-methylene-5,6,7,8-tetrahydrofolate + NADPH + H(+) = 5-methyluridine(54) in tRNA + (6S)-5,6,7,8-tetrahydrofolate + NADP(+). Functionally, catalyzes the folate-dependent formation of 5-methyl-uridine at position 54 (M-5-U54) in all tRNAs. The sequence is that of Methylenetetrahydrofolate--tRNA-(uracil-5-)-methyltransferase TrmFO from Rhizobium etli (strain ATCC 51251 / DSM 11541 / JCM 21823 / NBRC 15573 / CFN 42).